The sequence spans 284 residues: uncharacterized protein (284 aa).

A helical membrane pass occupies residues I12–N32.

The protein belongs to the serine esterase family.

The protein localises to the membrane. This is an uncharacterized protein from Escherichia coli (strain K12).